The sequence spans 313 residues: L-lactate dehydrogenase 1 (313 aa).

Val-15, Asp-36, Arg-41, and Tyr-66 together coordinate NAD(+). Residues Gln-83, Arg-89, and 121–124 contribute to the substrate site; that span reads NPVD. NAD(+) is bound by residues 119–121 and Ser-144; that span reads ASN. 149-152 lines the substrate pocket; the sequence is DTAR. Arg-154 and His-169 together coordinate beta-D-fructose 1,6-bisphosphate. The Proton acceptor role is filled by His-176. Tyr-218 carries the phosphotyrosine modification. Thr-227 is a binding site for substrate.

Belongs to the LDH/MDH superfamily. LDH family. In terms of assembly, homotetramer.

The protein resides in the cytoplasm. It catalyses the reaction (S)-lactate + NAD(+) = pyruvate + NADH + H(+). It participates in fermentation; pyruvate fermentation to lactate; (S)-lactate from pyruvate: step 1/1. With respect to regulation, allosterically activated by fructose 1,6-bisphosphate (FBP). Its function is as follows. Catalyzes the conversion of lactate to pyruvate. The sequence is that of L-lactate dehydrogenase 1 from Listeria monocytogenes serotype 4b (strain F2365).